The sequence spans 133 residues: Transmembrane protein 60 (133 aa).

A run of 4 helical transmembrane segments spans residues 5 to 25, 35 to 55, 78 to 98, and 110 to 130; these read LAQRVLLTWLFTLLFLIMLVL, WFLIFIPVWIFDTILLVLLIV, AWYLIAMLLKLAFCLALCAKL, and FIPLWALLAGALTELGYNVFF.

It is found in the membrane. This is Transmembrane protein 60 (TMEM60) from Homo sapiens (Human).